The chain runs to 173 residues: Lectin BRA-2 (173 aa).

Asn39 carries N-linked (GlcNAc...) asparagine glycosylation. Intrachain disulfides connect Cys47–Cys61, Cys78–Cys168, and Cys144–Cys160. In terms of domain architecture, C-type lectin spans 51 to 170 (PNGWVTSENK…NDRYNFVCEI (120 aa)).

Homohexamer; disulfide-linked. As to expression, coelemic fluid.

In terms of biological role, sugar-binding protein which recognizes specific carbohydrate structures and agglutinates a variety of animal cells by binding to cell-surface glycoproteins and glycolipids. Calcium-dependent lectin. Invertebrate lectins may be involved in defense functions. In Megabalanus rosa (Acorn barnacle), this protein is Lectin BRA-2.